The sequence spans 334 residues: Cytoskeleton protein RodZ (334 aa).

Residues 1–111 are Cytoplasmic-facing; sequence MNTEATHDQN…LGKRRKKRDG (111 aa). Residues 19–71 form the HTH cro/C1-type domain; that stretch reads LRNAREQLGLSQQAVAERLCLKVSTVRDIEEDKAPSDLASTFLRGYIRSYARL. Residues 30–49 constitute a DNA-binding region (H-T-H motif); it reads QQAVAERLCLKVSTVRDIEE. Residues 112–132 form a helical; Signal-anchor for type II membrane protein membrane-spanning segment; the sequence is WLMSFTWLVLFVVVGLTGAWW. Residues 133 to 334 lie on the Periplasmic side of the membrane; the sequence is WQNHKAHQEE…TLNAEPTPAQ (202 aa). Residues 152-210 form a disordered region; it reads AGLNADKDSGQSVPLDTGAVTSQDTTPAQTAPAPATPVDSTAATQTPAPTAAATQNTVV. Over residues 161 to 175 the composition is skewed to polar residues; the sequence is GQSVPLDTGAVTSQD. The segment covering 176-210 has biased composition (low complexity); the sequence is TTPAQTAPAPATPVDSTAATQTPAPTAAATQNTVV.

It belongs to the RodZ family.

It is found in the cell inner membrane. In terms of biological role, cytoskeletal protein that is involved in cell-shape control through regulation of the length of the long axis. In Salmonella gallinarum (strain 287/91 / NCTC 13346), this protein is Cytoskeleton protein RodZ.